We begin with the raw amino-acid sequence, 455 residues long: UDP-glycosyltransferase 87A2 (455 aa).

At M1 the chain carries N-acetylmethionine. Residues S278, 327 to 329 (CDQ), 344 to 352 (HCGFNSTLE), and 366 to 369 (FWDQ) contribute to the UDP-alpha-D-glucose site.

The protein belongs to the UDP-glycosyltransferase family.

The polypeptide is UDP-glycosyltransferase 87A2 (UGT87A2) (Arabidopsis thaliana (Mouse-ear cress)).